The following is a 414-amino-acid chain: Histidine--tRNA ligase (414 aa).

This sequence belongs to the class-II aminoacyl-tRNA synthetase family. As to quaternary structure, homodimer.

The protein resides in the cytoplasm. The catalysed reaction is tRNA(His) + L-histidine + ATP = L-histidyl-tRNA(His) + AMP + diphosphate + H(+). The sequence is that of Histidine--tRNA ligase from Ehrlichia ruminantium (strain Welgevonden).